Reading from the N-terminus, the 274-residue chain is Putative pyruvate, phosphate dikinase regulatory protein 1 (274 aa).

149-156 is a binding site for ADP; sequence GISRTSKT.

The protein belongs to the pyruvate, phosphate/water dikinase regulatory protein family. PDRP subfamily.

It carries out the reaction N(tele)-phospho-L-histidyl/L-threonyl-[pyruvate, phosphate dikinase] + ADP = N(tele)-phospho-L-histidyl/O-phospho-L-threonyl-[pyruvate, phosphate dikinase] + AMP + H(+). It catalyses the reaction N(tele)-phospho-L-histidyl/O-phospho-L-threonyl-[pyruvate, phosphate dikinase] + phosphate + H(+) = N(tele)-phospho-L-histidyl/L-threonyl-[pyruvate, phosphate dikinase] + diphosphate. Bifunctional serine/threonine kinase and phosphorylase involved in the regulation of the pyruvate, phosphate dikinase (PPDK) by catalyzing its phosphorylation/dephosphorylation. The polypeptide is Putative pyruvate, phosphate dikinase regulatory protein 1 (Listeria monocytogenes serotype 4b (strain F2365)).